The chain runs to 860 residues: Spindle and centriole-associated protein 1 (860 aa).

Disordered stretches follow at residues 160–200 (ESVI…SQSN), 232–254 (QSQM…QKAA), and 293–330 (KQLL…SSSN). T236 carries the post-translational modification Phosphothreonine. Low complexity predominate over residues 236–249 (TASSGTPSSASPSG). The segment covering 308–330 (PSKQKSSMLSASTASTDLPSSSN) has biased composition (polar residues). Residues 383–437 (RYLKESELQLRKEVETRQRLEEALGDHRELIDALTAEVLFLREENTATQARLQQY) are a coiled coil. S646 carries the post-translational modification Phosphoserine. The stretch at 729–755 (SSMEERIAELNRQSMEARGKLLQLIEQ) forms a coiled coil. Phosphoserine is present on residues S765, S769, and S824. The segment at 790–860 (IPGAEAPESS…GWFALSTHVS (71 aa)) is disordered. Low complexity predominate over residues 808 to 824 (SGLNSRRSSGAASNSCS).

In terms of assembly, interacts with CEP120.

The protein resides in the cytoplasm. It localises to the cytoskeleton. The protein localises to the microtubule organizing center. It is found in the centrosome. Its subcellular location is the centriole. The protein resides in the spindle. In terms of biological role, regulator required for centriole duplication. for proper bipolar spindle formation and chromosome congression in mitosis. The protein is Spindle and centriole-associated protein 1 (SPICE1) of Bos taurus (Bovine).